We begin with the raw amino-acid sequence, 840 residues long: Heat shock 70 kDa protein 4 (840 aa).

Lys53 is subject to N6-acetyllysine. The residue at position 76 (Ser76) is a Phosphoserine. Phosphotyrosine occurs at positions 89 and 336. A phosphoserine mark is found at Ser393 and Ser415. Lys430 is modified (N6-acetyllysine). Residues 500 to 575 are disordered; the sequence is VHKSEENEEP…QAKKAKVKTS (76 aa). Positions 514–533 are enriched in basic and acidic residues; the sequence is QNAKEEEKMQVDQEEPHVEE. Thr538 is modified (phosphothreonine). 2 positions are modified to phosphoserine: Ser546 and Ser647. Tyr660 carries the post-translational modification Phosphotyrosine. The residue at position 679 (Lys679) is an N6-acetyllysine. Position 756 is a phosphoserine (Ser756). Lys773 carries the post-translational modification N6-methyllysine. Positions 783-840 are disordered; it reads ISKPKPKVEPPKEEQKNAEQNGPVDGQGDNPGPQAAEQGTDAAVPSDSDKKLPEMDID. Composition is skewed to basic and acidic residues over residues 788–799 and 829–840; these read PKVEPPKEEQKN and DSDKKLPEMDID.

This sequence belongs to the heat shock protein 70 family. As to quaternary structure, interacts with TJP1/ZO-1.

The protein localises to the cytoplasm. This chain is Heat shock 70 kDa protein 4 (HSPA4), found in Pongo abelii (Sumatran orangutan).